Consider the following 146-residue polypeptide: Hemoglobin subunit beta (146 aa).

The residue at position 1 (Val1) is an N-acetylvaline. Residues His2 to His146 enclose the Globin domain. Thr12 bears the Phosphothreonine mark. Position 44 is a phosphoserine (Ser44). An N6-acetyllysine modification is found at Lys59. A heme b-binding site is contributed by His63. At Lys82 the chain carries N6-acetyllysine. A heme b-binding site is contributed by His92. Cys93 carries the post-translational modification S-nitrosocysteine. An N6-acetyllysine modification is found at Lys144.

Belongs to the globin family. Heterotetramer of two alpha chains and two beta chains. In terms of tissue distribution, red blood cells.

Its function is as follows. Involved in oxygen transport from the lung to the various peripheral tissues. The polypeptide is Hemoglobin subunit beta (HBB) (Tadarida brasiliensis (Brazilian free-tailed bat)).